A 184-amino-acid chain; its full sequence is Large ribosomal subunit protein uL18 (184 aa).

Belongs to the universal ribosomal protein uL18 family. Part of the 50S ribosomal subunit. Contacts the 5S and 23S rRNAs.

Functionally, this is one of the proteins that bind and probably mediate the attachment of the 5S RNA into the large ribosomal subunit, where it forms part of the central protuberance. The polypeptide is Large ribosomal subunit protein uL18 (Natronomonas pharaonis (strain ATCC 35678 / DSM 2160 / CIP 103997 / JCM 8858 / NBRC 14720 / NCIMB 2260 / Gabara) (Halobacterium pharaonis)).